The following is a 373-amino-acid chain: Spermidine/putrescine import ATP-binding protein PotA (373 aa).

The region spanning Ile-11–Ile-241 is the ABC transporter domain. Residue Gly-43–Thr-50 coordinates ATP.

The protein belongs to the ABC transporter superfamily. Spermidine/putrescine importer (TC 3.A.1.11.1) family. The complex is composed of two ATP-binding proteins (PotA), two transmembrane proteins (PotB and PotC) and a solute-binding protein (PotD).

The protein resides in the cell inner membrane. It catalyses the reaction ATP + H2O + polyamine-[polyamine-binding protein]Side 1 = ADP + phosphate + polyamineSide 2 + [polyamine-binding protein]Side 1.. In terms of biological role, part of the ABC transporter complex PotABCD involved in spermidine/putrescine import. Responsible for energy coupling to the transport system. This Mannheimia succiniciproducens (strain KCTC 0769BP / MBEL55E) protein is Spermidine/putrescine import ATP-binding protein PotA.